The sequence spans 338 residues: Phospho-2-dehydro-3-deoxyheptonate aldolase (338 aa).

Belongs to the class-I DAHP synthase family. In terms of assembly, homotetramer. Requires a divalent metal cation as cofactor.

It carries out the reaction D-erythrose 4-phosphate + phosphoenolpyruvate + H2O = 7-phospho-2-dehydro-3-deoxy-D-arabino-heptonate + phosphate. It participates in metabolic intermediate biosynthesis; chorismate biosynthesis; chorismate from D-erythrose 4-phosphate and phosphoenolpyruvate: step 1/7. Inhibited by L-phenylalanine and L-tyrosine. Catalyzes the condensation of phosphoenolpyruvate (PEP) and D-erythrose-4-phosphate (E4P) giving rise to 3-deoxy-D-arabino-heptulosonate-7-phosphate (DAHP). This is Phospho-2-dehydro-3-deoxyheptonate aldolase (aroF) from Thermotoga maritima (strain ATCC 43589 / DSM 3109 / JCM 10099 / NBRC 100826 / MSB8).